The following is a 215-amino-acid chain: Ribosomal RNA small subunit methyltransferase G (215 aa).

S-adenosyl-L-methionine-binding positions include G77, F82, 130–131, and R146; that span reads IE.

This sequence belongs to the methyltransferase superfamily. RNA methyltransferase RsmG family.

It is found in the cytoplasm. It carries out the reaction guanosine(527) in 16S rRNA + S-adenosyl-L-methionine = N(7)-methylguanosine(527) in 16S rRNA + S-adenosyl-L-homocysteine. Specifically methylates the N7 position of guanine in position 527 of 16S rRNA. In Bartonella henselae (strain ATCC 49882 / DSM 28221 / CCUG 30454 / Houston 1) (Rochalimaea henselae), this protein is Ribosomal RNA small subunit methyltransferase G.